Here is a 601-residue protein sequence, read N- to C-terminus: Elongation factor 4 (601 aa).

A tr-type G domain is found at 6–188; sequence KNIRNFSIIA…QIIKKIPAPD (183 aa). Residues 18–23 and 135–138 each bind GTP; these read DHGKST and NKID.

This sequence belongs to the TRAFAC class translation factor GTPase superfamily. Classic translation factor GTPase family. LepA subfamily.

The protein localises to the cell membrane. The catalysed reaction is GTP + H2O = GDP + phosphate + H(+). Required for accurate and efficient protein synthesis under certain stress conditions. May act as a fidelity factor of the translation reaction, by catalyzing a one-codon backward translocation of tRNAs on improperly translocated ribosomes. Back-translocation proceeds from a post-translocation (POST) complex to a pre-translocation (PRE) complex, thus giving elongation factor G a second chance to translocate the tRNAs correctly. Binds to ribosomes in a GTP-dependent manner. This chain is Elongation factor 4, found in Buchnera aphidicola subsp. Schizaphis graminum (strain Sg).